Reading from the N-terminus, the 331-residue chain is Meiotically up-regulated gene 172 protein (331 aa).

The stretch at 72–166 (IKNNEYEKQR…KGNYGLVKAR (95 aa)) forms a coiled coil.

It belongs to the ADIP family.

It is found in the cytoplasm. Its function is as follows. Has a role in meiosis. The chain is Meiotically up-regulated gene 172 protein (mug172) from Schizosaccharomyces pombe (strain 972 / ATCC 24843) (Fission yeast).